Here is a 118-residue protein sequence, read N- to C-terminus: MPRVKRGVTARARHKKVLALAKGFRGRRKNVYRIAKQAVMKAGQYAYRDRRAKKRVFRRLWIARINAASRSLGLTYSKFIAGLKKAQIDIDRKVLSDMAIHDPAAFGSIVDKVKAQLA.

This sequence belongs to the bacterial ribosomal protein bL20 family.

In terms of biological role, binds directly to 23S ribosomal RNA and is necessary for the in vitro assembly process of the 50S ribosomal subunit. It is not involved in the protein synthesizing functions of that subunit. The sequence is that of Large ribosomal subunit protein bL20 from Leptothrix cholodnii (strain ATCC 51168 / LMG 8142 / SP-6) (Leptothrix discophora (strain SP-6)).